The chain runs to 670 residues: DNA ligase (670 aa).

NAD(+) contacts are provided by residues 32–36, 81–82, and glutamate 111; these read DAEYD and SL. Lysine 113 serves as the catalytic N6-AMP-lysine intermediate. The NAD(+) site is built by arginine 134, glutamate 171, lysine 290, and lysine 314. Residues cysteine 408, cysteine 411, cysteine 426, and cysteine 432 each contribute to the Zn(2+) site. Positions 591–670 constitute a BRCT domain; it reads EEALSLKGQT…DGLLAVLAGE (80 aa).

This sequence belongs to the NAD-dependent DNA ligase family. LigA subfamily. The cofactor is Mg(2+). Mn(2+) is required as a cofactor.

The catalysed reaction is NAD(+) + (deoxyribonucleotide)n-3'-hydroxyl + 5'-phospho-(deoxyribonucleotide)m = (deoxyribonucleotide)n+m + AMP + beta-nicotinamide D-nucleotide.. In terms of biological role, DNA ligase that catalyzes the formation of phosphodiester linkages between 5'-phosphoryl and 3'-hydroxyl groups in double-stranded DNA using NAD as a coenzyme and as the energy source for the reaction. It is essential for DNA replication and repair of damaged DNA. The polypeptide is DNA ligase (Shewanella sediminis (strain HAW-EB3)).